The sequence spans 293 residues: tRNA-cytidine(32) 2-sulfurtransferase (293 aa).

The PP-loop motif motif lies at 62–67 (SGGKDS). Residues Cys-137, Cys-140, and Cys-228 each contribute to the [4Fe-4S] cluster site.

This sequence belongs to the TtcA family. In terms of assembly, homodimer. Requires Mg(2+) as cofactor. It depends on [4Fe-4S] cluster as a cofactor.

Its subcellular location is the cytoplasm. The catalysed reaction is cytidine(32) in tRNA + S-sulfanyl-L-cysteinyl-[cysteine desulfurase] + AH2 + ATP = 2-thiocytidine(32) in tRNA + L-cysteinyl-[cysteine desulfurase] + A + AMP + diphosphate + H(+). Its pathway is tRNA modification. Functionally, catalyzes the ATP-dependent 2-thiolation of cytidine in position 32 of tRNA, to form 2-thiocytidine (s(2)C32). The sulfur atoms are provided by the cysteine/cysteine desulfurase (IscS) system. The sequence is that of tRNA-cytidine(32) 2-sulfurtransferase from Brucella melitensis biotype 1 (strain ATCC 23456 / CCUG 17765 / NCTC 10094 / 16M).